A 592-amino-acid polypeptide reads, in one-letter code: Medium-chain-fatty-acid--[acyl-carrier-protein] ligase JamA (592 aa).

The protein belongs to the ATP-dependent AMP-binding enzyme family.

It carries out the reaction a medium-chain fatty acid + holo-[ACP] + ATP = a medium-chain fatty acyl-[ACP] + AMP + diphosphate. The catalysed reaction is a medium-chain fatty acid + ATP + H(+) = a medium-chain fatty acyl-AMP + diphosphate. The enzyme catalyses a medium-chain fatty acyl-AMP + holo-[ACP] = a medium-chain fatty acyl-[ACP] + AMP + H(+). Its function is as follows. Ligase involved in the biosynthesis of jamaicamides, which show sodium channel blocking activity and fish toxicity. Initiates jamaicamide biosynthesis by the activation of the starter unit, 5-hexenoic acid, followed by the loading of the activated 5-hexenoic acid onto the acyl carrier protein JamC. In vitro, can also use 5-hexynoic acid, heptanoic acid, butanoic acid, hexanoic acid and benzoic acid. The chain is Medium-chain-fatty-acid--[acyl-carrier-protein] ligase JamA from Moorena producens (strain JHB).